The sequence spans 556 residues: Sesquiterpene synthase 2 (556 aa).

Residues D309, D313, D453, and E461 each coordinate Mg(2+). The DDXXD motif signature appears at 309–313; sequence DDIYD.

It belongs to the terpene synthase family. Tpsa subfamily. Mg(2+) is required as a cofactor. It depends on Mn(2+) as a cofactor. In terms of tissue distribution, mostly expressed in roots and mature leaflets and, to a lower extent, in rachis and developing leaflets.

It carries out the reaction (2E,6E)-farnesyl diphosphate = alpha-humulene + diphosphate. The enzyme catalyses (2E,6E)-farnesyl diphosphate = alpha-selinene + diphosphate. It catalyses the reaction (2E,6E)-farnesyl diphosphate = delta-cadinene + diphosphate. The catalysed reaction is (2E,6E)-farnesyl diphosphate = (1S,2S,4R)-beta-elemene + diphosphate. It participates in secondary metabolite biosynthesis; terpenoid biosynthesis. In terms of biological role, sesquiterpene synthase involved in the biosynthesis of volatile compounds known for their medicinal efficacy for treating enteritis, dysentery, itch and some cancers. Mediates the conversion of (2E,6E)-farnesyl diphosphate (FPP) into beta-elemene, alpha-humulene, delta-cadinene and alpha-selinene. The polypeptide is Sesquiterpene synthase 2 (Toona sinensis (Chinese mahogany)).